Reading from the N-terminus, the 429-residue chain is Glutamate-1-semialdehyde 2,1-aminomutase (429 aa).

Residue K265 is modified to N6-(pyridoxal phosphate)lysine.

Belongs to the class-III pyridoxal-phosphate-dependent aminotransferase family. HemL subfamily. In terms of assembly, homodimer. It depends on pyridoxal 5'-phosphate as a cofactor.

It is found in the cytoplasm. It catalyses the reaction (S)-4-amino-5-oxopentanoate = 5-aminolevulinate. It functions in the pathway porphyrin-containing compound metabolism; protoporphyrin-IX biosynthesis; 5-aminolevulinate from L-glutamyl-tRNA(Glu): step 2/2. In Chromohalobacter salexigens (strain ATCC BAA-138 / DSM 3043 / CIP 106854 / NCIMB 13768 / 1H11), this protein is Glutamate-1-semialdehyde 2,1-aminomutase.